The following is a 647-amino-acid chain: Zinc finger CCCH domain-containing protein 19 (647 aa).

C3H1-type zinc fingers lie at residues 16–45 (RRRSTDCIYFLASPLTCKKGSECEYRHSDA) and 47–73 (RMNPRDCWYWFNGNCANPKCSFRHPPL). The segment at 78–106 (GAPTTPRTSQQSAPQVSVPAQAPVPNPAS) is disordered. A compositionally biased stretch (low complexity) spans 86-106 (SQQSAPQVSVPAQAPVPNPAS). The C3H1-type 3 zinc-finger motif lies at 109–136 (AKQGVPCYYFQKGMCVKGDRCAFLHLPQ). Disordered regions lie at residues 155 to 280 (VPHP…RTNG), 308 to 327 (LSESRFSQREPMPLTADSSD), 335 to 452 (QRRL…DAES), 512 to 580 (LKRK…LSPA), and 586 to 605 (EAADDASRELEEQQDVETAE). Composition is skewed to polar residues over residues 160–175 (LKNSWTKPNSSAQQNA) and 189–203 (NGKTAQKQNLTNRAG). Basic and acidic residues predominate over residues 267–280 (SLREDRGAYRRTNG). Over residues 347–359 (SDRHNVYPEDERH) the composition is skewed to basic and acidic residues. Positions 369–379 (QASNDGVSSSR) are enriched in polar residues. Over residues 419–433 (LRGKLHDRLKAKPNE) the composition is skewed to basic and acidic residues. Over residues 435–445 (VSGNVQSSLSK) the composition is skewed to polar residues. The span at 527–536 (GSKREEHSGG) shows a compositional bias: basic and acidic residues.

The chain is Zinc finger CCCH domain-containing protein 19 from Oryza sativa subsp. japonica (Rice).